Consider the following 40-residue polypeptide: Photosystem II reaction center protein T (40 aa).

The chain crosses the membrane as a helical span at residues Ala3–Phe23.

The protein belongs to the PsbT family. In terms of assembly, PSII is composed of 1 copy each of membrane proteins PsbA, PsbB, PsbC, PsbD, PsbE, PsbF, PsbH, PsbI, PsbJ, PsbK, PsbL, PsbM, PsbT, PsbY, PsbZ, Psb30/Ycf12, at least 3 peripheral proteins of the oxygen-evolving complex and a large number of cofactors. It forms dimeric complexes.

The protein localises to the plastid. The protein resides in the chloroplast thylakoid membrane. Its function is as follows. Found at the monomer-monomer interface of the photosystem II (PS II) dimer, plays a role in assembly and dimerization of PSII. PSII is a light-driven water plastoquinone oxidoreductase, using light energy to abstract electrons from H(2)O, generating a proton gradient subsequently used for ATP formation. This chain is Photosystem II reaction center protein T, found in Anthoceros angustus (Hornwort).